A 2542-amino-acid chain; its full sequence is Talin-2 (2542 aa).

The FERM domain maps to 88 to 406; sequence RPQKIRMLDG…GYIDIILKKK (319 aa). The segment at 312-406 is interaction with PIP5K1C; that stretch reads GVSFFLVKEK…GYIDIILKKK (95 aa). Phosphoserine occurs at positions 428, 449, 623, and 1023. Residue Tyr1665 is modified to Phosphotyrosine. A Phosphothreonine modification is found at Thr1843. The I/LWEQ domain maps to 2294 to 2533; sequence TEWVDPEDPT…QIRQQQYKFL (240 aa).

In terms of assembly, interacts directly with PIP5K1C.

It is found in the cytoplasm. Its subcellular location is the cell junction. The protein localises to the focal adhesion. It localises to the synapse. The protein resides in the cell membrane. It is found in the cytoskeleton. Functionally, as a major component of focal adhesion plaques that links integrin to the actin cytoskeleton, may play an important role in cell adhesion. Recruits PIP5K1C to focal adhesion plaques and strongly activates its kinase activity. The sequence is that of Talin-2 (TLN2) from Homo sapiens (Human).